A 259-amino-acid polypeptide reads, in one-letter code: HTH-type transcriptional regulator Rv1719 (259 aa).

The 63-residue stretch at 13–75 (IQVIARAAEL…GARGPYRLGP (63 aa)) folds into the HTH iclR-type domain. Residues 35 to 54 (QAEIGERVGMARSTVSRILN) constitute a DNA-binding region (H-T-H motif). In terms of domain architecture, IclR-ED spans 88–259 (VVTEMHPFLT…AWFNGTEDRK (172 aa)).

As to quaternary structure, homodimer.

Binds to the upstream region of Rv1714 and probably modulates the expression of the downstream gene(s). The protein is HTH-type transcriptional regulator Rv1719 of Mycobacterium tuberculosis (strain ATCC 25618 / H37Rv).